Consider the following 439-residue polypeptide: Microfibrillar-associated protein 1 (439 aa).

Disordered regions lie at residues methionine 1–glycine 27 and tyrosine 39–lysine 200. Serine 2 is modified (N-acetylserine). Phosphoserine is present on residues serine 52 and serine 53. Basic and acidic residues predominate over residues glutamine 61–glutamate 70. Lysine 67 is covalently cross-linked (Glycyl lysine isopeptide (Lys-Gly) (interchain with G-Cter in SUMO2)). Positions alanine 71 to serine 81 are enriched in acidic residues. Serine 94, serine 116, serine 118, serine 132, and serine 133 each carry phosphoserine. Composition is skewed to acidic residues over residues valine 112–glycine 122 and aspartate 131–glutamate 144. Residues isoleucine 145–glutamate 163 show a composition bias toward basic and acidic residues. Positions glutamate 178–methionine 195 are enriched in acidic residues. Lysine 249 is covalently cross-linked (Glycyl lysine isopeptide (Lys-Gly) (interchain with G-Cter in SUMO2)). Threonine 267 carries the post-translational modification Phosphothreonine. Residue lysine 357 forms a Glycyl lysine isopeptide (Lys-Gly) (interchain with G-Cter in SUMO2) linkage. Position 361 is a phosphoserine (serine 361). Residues lysine 371, lysine 381, lysine 415, and lysine 418 each participate in a glycyl lysine isopeptide (Lys-Gly) (interchain with G-Cter in SUMO2) cross-link. A Phosphoserine modification is found at serine 432.

The protein belongs to the MFAP1 family. As to quaternary structure, component of the spliceosome B complex. Interacts with PRPF38A (via N-terminal interaction domain).

Its subcellular location is the nucleus. Its function is as follows. Involved in pre-mRNA splicing as a component of the spliceosome. This Homo sapiens (Human) protein is Microfibrillar-associated protein 1.